The sequence spans 372 residues: DNA replication and repair protein RecF (372 aa).

30–37 (GANGQGKT) is an ATP binding site.

Belongs to the RecF family.

Its subcellular location is the cytoplasm. Its function is as follows. The RecF protein is involved in DNA metabolism; it is required for DNA replication and normal SOS inducibility. RecF binds preferentially to single-stranded, linear DNA. It also seems to bind ATP. The polypeptide is DNA replication and repair protein RecF (Heliobacterium modesticaldum (strain ATCC 51547 / Ice1)).